The chain runs to 186 residues: Ribosome-recycling factor (186 aa).

Belongs to the RRF family.

The protein localises to the cytoplasm. In terms of biological role, responsible for the release of ribosomes from messenger RNA at the termination of protein biosynthesis. May increase the efficiency of translation by recycling ribosomes from one round of translation to another. This chain is Ribosome-recycling factor, found in Rickettsia peacockii (strain Rustic).